Reading from the N-terminus, the 269-residue chain is Protein NETWORKED 3A (269 aa).

The 82-residue stretch at 6 to 87 (SKWWWIGNHN…ERYDLLRPSS (82 aa)) folds into the NAB domain. The disordered stretch occupies residues 87-113 (SVHKHGSDSESHEKSSTCDESSWSEAC). The segment covering 91–103 (HGSDSESHEKSST) has biased composition (basic and acidic residues). A coiled-coil region spans residues 155–214 (NGNSEMMKIEIERLREENKVYSEMVREKDEEKREAIRQMSVAIQMLKEENSELKKRVTNT).

The protein belongs to the NET family.

Its subcellular location is the cytoplasm. It is found in the cytoskeleton. It localises to the nucleus membrane. Functionally, plant-specific actin binding protein. May be part of a membrane-cytoskeletal adapter complex. This Arabidopsis thaliana (Mouse-ear cress) protein is Protein NETWORKED 3A.